A 347-amino-acid polypeptide reads, in one-letter code: GMP reductase (347 aa).

A108 to A131 provides a ligand contact to NADP(+). Residues G181 and G183 each coordinate K(+). C186 acts as the Thioimidate intermediate in catalysis. NADP(+) is bound at residue I216–V239.

This sequence belongs to the IMPDH/GMPR family. GuaC type 1 subfamily. In terms of assembly, homotetramer.

The catalysed reaction is IMP + NH4(+) + NADP(+) = GMP + NADPH + 2 H(+). Functionally, catalyzes the irreversible NADPH-dependent deamination of GMP to IMP. It functions in the conversion of nucleobase, nucleoside and nucleotide derivatives of G to A nucleotides, and in maintaining the intracellular balance of A and G nucleotides. This is GMP reductase from Salmonella arizonae (strain ATCC BAA-731 / CDC346-86 / RSK2980).